The sequence spans 314 residues: Nucleotide-binding protein CE1710 (314 aa).

Residues 1–29 form a disordered region; it reads MNQTPGSTVPETATPVTSPASSPSAPETT. Over residues 7–29 the composition is skewed to low complexity; sequence STVPETATPVTSPASSPSAPETT. Residue 37–44 coordinates ATP; it reads GMSGAGLS. 88-91 contributes to the GTP binding site; it reads DVRS.

Belongs to the RapZ-like family.

Functionally, displays ATPase and GTPase activities. The protein is Nucleotide-binding protein CE1710 of Corynebacterium efficiens (strain DSM 44549 / YS-314 / AJ 12310 / JCM 11189 / NBRC 100395).